Here is a 137-residue protein sequence, read N- to C-terminus: Large ribosomal subunit protein uL16 (137 aa).

Over residues 1–17 (MLQPKRTKFRKQQKGRN) the composition is skewed to basic residues. Residues 1-21 (MLQPKRTKFRKQQKGRNRGQA) are disordered.

It belongs to the universal ribosomal protein uL16 family. Part of the 50S ribosomal subunit.

Its function is as follows. Binds 23S rRNA and is also seen to make contacts with the A and possibly P site tRNAs. The polypeptide is Large ribosomal subunit protein uL16 (Nitrosococcus oceani (strain ATCC 19707 / BCRC 17464 / JCM 30415 / NCIMB 11848 / C-107)).